Here is a 100-residue protein sequence, read N- to C-terminus: Large ribosomal subunit protein uL23 (100 aa).

This sequence belongs to the universal ribosomal protein uL23 family. As to quaternary structure, part of the 50S ribosomal subunit. Contacts protein L29, and trigger factor when it is bound to the ribosome.

In terms of biological role, one of the early assembly proteins it binds 23S rRNA. One of the proteins that surrounds the polypeptide exit tunnel on the outside of the ribosome. Forms the main docking site for trigger factor binding to the ribosome. In Xylella fastidiosa (strain 9a5c), this protein is Large ribosomal subunit protein uL23.